A 358-amino-acid chain; its full sequence is Alanine racemase (358 aa).

The active-site Proton acceptor; specific for D-alanine is K34. K34 carries the post-translational modification N6-(pyridoxal phosphate)lysine. Substrate is bound at residue R129. Y254 serves as the catalytic Proton acceptor; specific for L-alanine. M302 lines the substrate pocket.

It belongs to the alanine racemase family. The cofactor is pyridoxal 5'-phosphate.

The catalysed reaction is L-alanine = D-alanine. The protein operates within amino-acid biosynthesis; D-alanine biosynthesis; D-alanine from L-alanine: step 1/1. Its function is as follows. Catalyzes the interconversion of L-alanine and D-alanine. May also act on other amino acids. The chain is Alanine racemase (alr) from Aliivibrio salmonicida (strain LFI1238) (Vibrio salmonicida (strain LFI1238)).